Reading from the N-terminus, the 555-residue chain is Ribonuclease J2 (555 aa).

4 residues coordinate Zn(2+): histidine 74, histidine 76, histidine 142, and aspartate 164. 364-368 (HVSGH) contributes to the substrate binding site.

It belongs to the metallo-beta-lactamase superfamily. RNA-metabolizing metallo-beta-lactamase-like family. Bacterial RNase J subfamily. As to quaternary structure, unclear whether it forms homodimers or belongs to a larger complex. According to probably does not form homodimers, while shows homodimer formation. Both reports show RNase J1 and J2 interaction, probably as a heterotetramer shows it is a component of a possible RNA degradosome complex composed of rny, rnjA, rnjB, pnp, pfkA and eno, while finds no evidence of an RNA degradosome complex. Zn(2+) serves as cofactor.

It is found in the cytoplasm. Functionally, endonucleolytically cleaves the 5'-leader sequence of certain mRNAs. Endonuclease digestion by the RNase J1/J2 complex occurs at a different site and in some cases more efficiently than J1 or J2 alone. The exonuclease activity of the J1/J2 complex is highly processive on substrates longer than 5 nucleotides, on shorter substrates is distributive. Plays a role in mRNA maturation and stability. Appears to have a limited effect on 16S rRNA maturation, despite its similarity to RNase J1. This subunit alone has very poor 5'-3' exonuclease activity. This Bacillus subtilis (strain 168) protein is Ribonuclease J2.